Reading from the N-terminus, the 334-residue chain is Aspartate carbamoyltransferase catalytic subunit (334 aa).

Carbamoyl phosphate contacts are provided by arginine 71 and threonine 72. An L-aspartate-binding site is contributed by lysine 99. Arginine 121, histidine 151, and glutamine 154 together coordinate carbamoyl phosphate. L-aspartate-binding residues include arginine 184 and arginine 239. Carbamoyl phosphate contacts are provided by glycine 280 and proline 281.

Belongs to the aspartate/ornithine carbamoyltransferase superfamily. ATCase family. As to quaternary structure, heterododecamer (2C3:3R2) of six catalytic PyrB chains organized as two trimers (C3), and six regulatory PyrI chains organized as three dimers (R2).

The catalysed reaction is carbamoyl phosphate + L-aspartate = N-carbamoyl-L-aspartate + phosphate + H(+). Its pathway is pyrimidine metabolism; UMP biosynthesis via de novo pathway; (S)-dihydroorotate from bicarbonate: step 2/3. Functionally, catalyzes the condensation of carbamoyl phosphate and aspartate to form carbamoyl aspartate and inorganic phosphate, the committed step in the de novo pyrimidine nucleotide biosynthesis pathway. The sequence is that of Aspartate carbamoyltransferase catalytic subunit from Pseudomonas putida (Arthrobacter siderocapsulatus).